The chain runs to 391 residues: Probable FAD-dependent oxidoreductase PA4991 (391 aa).

Residues A17, E36, 44 to 45, 49 to 51, and 346 to 347 contribute to the FAD site; these read QS, QGI, and LA.

This sequence belongs to the DAO family. As to quaternary structure, monomer. The cofactor is FAD.

Functionally, probably functions as a FAD-dependent oxidoreductase, whose physiological substrate is unknown. Does not display amino-acid oxidase or glycerol-3-phosphate dehydrogenase activities. Is essential for growth of P.aeruginosa in the sputum of cystic fibrosis patients. In Pseudomonas aeruginosa (strain ATCC 15692 / DSM 22644 / CIP 104116 / JCM 14847 / LMG 12228 / 1C / PRS 101 / PAO1), this protein is Probable FAD-dependent oxidoreductase PA4991.